Reading from the N-terminus, the 764-residue chain is Protective antigen (764 aa).

The signal sequence occupies residues 1-29 (MKKRKVLIPLMALSTILVSSTGNLEVIQA). A domain 1, calcium-binding; LF and EF binding sites region spans residues 30 to 287 (EVKQENRLLN…PEARHPLVAA (258 aa)). Residues 43–179 (SSSQGLLGYY…NKKEVISSDN (137 aa)) enclose the PA14 domain. Residues 176-214 (SSDNLQLPELKQKSSNSRKKRSTSAGPTVPDRDNDGIPD) form a disordered region. 5 residues coordinate Ca(2+): D206, D208, D210, I212, and E217. The tract at residues 231–239 (FLSPWISNI) is alpha-clamp. S251, K254, and D264 together coordinate Ca(2+). The domain 2, membrane insertion and heptamerization stretch occupies residues 288 to 516 (YPIVHVDMEN…SEVLPQIQET (229 aa)). Residues 302–333 (KNEDQSTQNTDSQTRTISKNTSTSRTHTSEVH) are disordered. Positions 306–327 (QSTQNTDSQTRTISKNTSTSRT) are enriched in polar residues. Beta stranded transmembrane passes span 331–342 (EVHGNAEVHASF) and 345–354 (IGGSVSAGFS). The interval 517 to 624 (TARIIFNGKD…KMNILIRDKR (108 aa)) is domain 3, heptamerization. Positions 625–764 (FHYDRNNIAV…IFSKKGYEIG (140 aa)) are domain 4, binding to the receptor.

This sequence belongs to the bacterial binary toxin family. As to quaternary structure, interacts with host ANTXR1 and ANTXR2. In terms of assembly, homooligomer; homooligomerizes to form homoheptamers (PA-63(7)) or homooctamers (PA-63(8)). PA-63(7) or PA-63(8) form ring-shaped oligomers that are in a pre-pore conformation, which do not penetrate the host membrane. PA-63(8) displays an enhanced stability, suggesting that this form circulates in the blood to reach and exert toxicity even in distant tissues. Interacts with lethal factor (LF) and edema factor (EF); can bind LF and EF simultaneously and interaction takes place following homooligomerization on the host cell membrane. PA-63(7) homoheptamer interacts with three molecules of LF to form the PA(7)LF(3) complex, in which the relative position of the N-terminal alpha-helices in the three LFs determines which factor is translocated first. Post-translationally, proteolytic activation by FURIN cleaves the protein in two parts, PA-20 and PA-63; the latter is the mature protein. The cleavage occurs at the cell surface and probably in the serum of infected animals as well; both native and cleaved PA are able to bind to the cell receptor. The release of PA-20 from the remaining receptor-bound PA-63 exposes the binding site for EF and LF, and promotes oligomerization and internalization of the protein.

It localises to the secreted. The protein resides in the host cell membrane. Its subcellular location is the host endosome membrane. Functionally, protective antigen constitutes one of the three proteins composing the anthrax toxin; it mediates attachment to host cells and translocation of edema factor (EF) and lethal factor (LF) into the host cytoplasm. PA associated with LF forms the lethal toxin (LeTx) and causes death when injected; PA associated with EF forms the edema toxin (EdTx) and produces edema. PA induces immunity to infection with anthrax. Its function is as follows. Mediates the attachment to host cells by binding host cell receptors ANTXR1 and ANTXR2. Following host cell surface attachment, PA is cleaved by FURIN to generate the PA-63 (Protective antigen PA-63) form, which constitutes the mature form of the protein that oligomerizes and forms a pore to translocate the enzymatic toxin components edema factor (EF) and lethal factor (LF) into the host cytosol. Mature form that oligomerizes and forms a pore to translocate the enzymatic toxin components edema factor (EF) and lethal factor (LF) into the host cytosol. Following attachment to host cell receptors and cleavage by FURIN, homooligomerizes to form ring-shaped oligomers that are in a pre-pore conformation, and associates with EF and LF. Toxin-leaded complexes are then endocytosed in a clathrin-dependent process, followed by a conformational change of oligomerized PA-63 from the pre-pore to pore state, which is triggered by the low pH in the endosome. Once active, the pore mediates unfolding of EF and LF, which pass through the pore and translocate into the host cytosol. This Bacillus anthracis protein is Protective antigen (pagA).